We begin with the raw amino-acid sequence, 391 residues long: NADH-quinone oxidoreductase subunit D (391 aa).

Belongs to the complex I 49 kDa subunit family. In terms of assembly, NDH-1 is composed of 14 different subunits. Subunits NuoB, C, D, E, F, and G constitute the peripheral sector of the complex.

The protein resides in the cell inner membrane. It catalyses the reaction a quinone + NADH + 5 H(+)(in) = a quinol + NAD(+) + 4 H(+)(out). Its function is as follows. NDH-1 shuttles electrons from NADH, via FMN and iron-sulfur (Fe-S) centers, to quinones in the respiratory chain. The immediate electron acceptor for the enzyme in this species is believed to be ubiquinone. Couples the redox reaction to proton translocation (for every two electrons transferred, four hydrogen ions are translocated across the cytoplasmic membrane), and thus conserves the redox energy in a proton gradient. The sequence is that of NADH-quinone oxidoreductase subunit D from Rickettsia bellii (strain OSU 85-389).